Consider the following 263-residue polypeptide: Lens fiber major intrinsic protein (263 aa).

Topologically, residues 1–9 (MWELRSASF) are cytoplasmic. A helical transmembrane segment spans residues 10-29 (WRAIFAEFFATLFYVFFGLG). The Extracellular portion of the chain corresponds to 30 to 41 (SSLRWAPGPLHV). The helical transmembrane segment at 42–59 (LQVAMAFGLALATLVQSV) threads the bilayer. Over 60–61 (GH) the chain is Cytoplasmic. Positions 62 to 77 (ISGAHVNPAVTFAFLV) form an intramembrane region, discontinuously helical. The NPA 1 motif lies at 68 to 70 (NPA). Residues 78–82 (GSQMS) lie on the Cytoplasmic side of the membrane. A helical transmembrane segment spans residues 83–106 (LLRAFCYMAAQLLGAVAGAAVLYS). Residues 107 to 127 (VTPPAVRGNLALNTLHPAVSV) lie on the Extracellular side of the membrane. The helical transmembrane segment at 128-148 (GQATTVEIFLTLQFVLCIFAT) threads the bilayer. Residues 149 to 156 (YDERRNGQ) lie on the Cytoplasmic side of the membrane. Residues 157–175 (LGSVALAVGFSLALGHLFG) traverse the membrane as a helical segment. Residues 176 to 178 (MYY) lie on the Extracellular side of the membrane. The segment at residues 179 to 193 (TGAGMNPARSFAPAI) is an intramembrane region (discontinuously helical). The NPA 2 signature appears at 184 to 186 (NPA). Topologically, residues 194–200 (LTGNFTN) are extracellular. A helical membrane pass occupies residues 201–222 (HWVYWVGPIIGGGLGSLLYDFL). The Cytoplasmic segment spans residues 223 to 263 (LFPRLKSISERLSVLKGAKPDVSNGQPEVTGEPVELNTQAL). An interaction with CALM region spans residues 227 to 237 (LKSISERLSVL). 2 positions are modified to phosphoserine: Ser-235 and Ser-245. Deamidated asparagine; by deterioration occurs at positions 246 and 259.

Belongs to the MIP/aquaporin (TC 1.A.8) family. Homotetramer; each monomer provides an independent water pore. Two homotetramers on opposing membranes can dimerize, forming a cell-cell junction. Interacts with CALM; the calcium-calmodulin/CALM complex interacts with the cytoplasmic domains of two aquaporins, leading to channel closure. Interacts with BFSP1 (via C-terminus); prevents calcium-dependent inhibition of the water channel activity. In terms of processing, subject to partial proteolytic cleavage in the eye lens core. Partial proteolysis promotes interactions between tetramers from adjoining membranes. Post-translationally, fatty acylated at Met-1 and Lys-238. The acyl modifications, in decreasing order of ion abundance, are: oleoyl (C18:1) &gt; palmitoyl (C16:0) &gt; stearoyl (C18:0) &gt; eicosenoyl (C20:1) &gt; dihomo-gamma-linolenoyl (C20:3) &gt; palmitoleoyl (C16:1) &gt; eicosadienoyl (C20:2). Expressed in the cortex and nucleus of the retina lens (at protein level). Major component of lens fiber gap junctions.

The protein localises to the cell membrane. Its subcellular location is the cell junction. It catalyses the reaction H2O(in) = H2O(out). The water channel activity is inhibited by calcium through calmodulin/CALM. In terms of biological role, aquaporins form homotetrameric transmembrane channels, with each monomer independently mediating water transport across the plasma membrane along its osmotic gradient. Specifically expressed in lens fiber cells, this aquaporin is crucial for maintaining lens water homeostasis and transparency. Beyond water permeability, it also acts as a cell-to-cell adhesion molecule, forming thin junctions between lens fiber cells that are essential for maintaining the ordered structure and transparency of the lens. This Homo sapiens (Human) protein is Lens fiber major intrinsic protein.